Reading from the N-terminus, the 142-residue chain is Nucleoside diphosphate kinase (142 aa).

Residues Lys11, Phe59, Arg87, Thr93, Arg104, and Asn114 each coordinate ATP. His117 functions as the Pros-phosphohistidine intermediate in the catalytic mechanism.

It belongs to the NDK family. Homotetramer. Mg(2+) is required as a cofactor.

The protein localises to the cytoplasm. The enzyme catalyses a 2'-deoxyribonucleoside 5'-diphosphate + ATP = a 2'-deoxyribonucleoside 5'-triphosphate + ADP. It catalyses the reaction a ribonucleoside 5'-diphosphate + ATP = a ribonucleoside 5'-triphosphate + ADP. Functionally, major role in the synthesis of nucleoside triphosphates other than ATP. The ATP gamma phosphate is transferred to the NDP beta phosphate via a ping-pong mechanism, using a phosphorylated active-site intermediate. The polypeptide is Nucleoside diphosphate kinase (Pectobacterium carotovorum subsp. carotovorum (strain PC1)).